We begin with the raw amino-acid sequence, 58 residues long: Potassium channel toxin alpha-KTx BmKcug1a (58 aa).

Residues 1-21 (MKISFLLLLAIVICSIGWTEA) form the signal peptide. Glutamine 22 carries the post-translational modification Pyrrolidone carboxylic acid. Disulfide bonds link cysteine 28–cysteine 49, cysteine 34–cysteine 54, and cysteine 38–cysteine 56.

This sequence belongs to the short scorpion toxin superfamily. Potassium channel inhibitor family. Alpha-KTx 01 subfamily. In terms of tissue distribution, expressed by the venom gland.

The protein localises to the secreted. Its function is as follows. Potent blocker of both large-conductance calcium-activated potassium channels (KCa1.1/KCNMA1) and voltage-gated potassium channels (Kv1.3/KCNA3 and ERG1/Kv11.1/KCNH2). In Olivierus martensii (Manchurian scorpion), this protein is Potassium channel toxin alpha-KTx BmKcug1a.